Consider the following 605-residue polypeptide: Sorting nexin MVP1 (605 aa).

2 disordered regions span residues 113-147 (PMDFSEEGERSSINFSASTTGRSQTPLFGDDLDDH) and 175-213 (EEQEALQQSQLSQSQLSRSTTPPPLNPQALVPESESGVW). Polar residues predominate over residues 123–138 (SSINFSASTTGRSQTP). A compositionally biased stretch (low complexity) spans 180–193 (LQQSQLSQSQLSRS). The PX domain occupies 226–343 (ADSVTLAIVP…TFVTLRNDIS (118 aa)). Residues Arg-264, Ser-266, Lys-290, and Arg-309 each coordinate a 1,2-diacyl-sn-glycero-3-phospho-(1D-myo-inositol-3-phosphate).

It belongs to the sorting nexin family.

The protein resides in the cytoplasm. It localises to the membrane. Required for vacuolar protein sorting. The polypeptide is Sorting nexin MVP1 (MVP1) (Yarrowia lipolytica (strain CLIB 122 / E 150) (Yeast)).